A 104-amino-acid polypeptide reads, in one-letter code: A-type ATP synthase subunit F (104 aa).

The protein belongs to the V-ATPase F subunit family. As to quaternary structure, has multiple subunits with at least A(3), B(3), C, D, E, F, H, I and proteolipid K(x).

The protein localises to the cell membrane. Component of the A-type ATP synthase that produces ATP from ADP in the presence of a proton gradient across the membrane. This Thermoplasma volcanium (strain ATCC 51530 / DSM 4299 / JCM 9571 / NBRC 15438 / GSS1) protein is A-type ATP synthase subunit F.